Consider the following 267-residue polypeptide: Ribosomal RNA small subunit methyltransferase NEP1 (267 aa).

A disordered region spans residues 1-46; the sequence is MSELKNGTTEPKKNETTQSDSKSKSTSTNKSSVPPASLVPVQPTAL. Positions 16–32 are enriched in low complexity; that stretch reads TTQSDSKSKSTSTNKSS. S-adenosyl-L-methionine-binding positions include Leu-195, Gly-222, 227-229, and 242-247; these read GKD and LSDYPL.

The protein belongs to the class IV-like SAM-binding methyltransferase superfamily. RNA methyltransferase NEP1 family. In terms of assembly, homodimer.

It is found in the nucleus. Its subcellular location is the nucleolus. The catalysed reaction is a pseudouridine in rRNA + S-adenosyl-L-methionine = an N(1)-methylpseudouridine in rRNA + S-adenosyl-L-homocysteine + H(+). S-adenosyl-L-methionine-dependent pseudouridine N(1)-methyltransferase that methylates the pseudouridine corresponding to position 1189 (Psi1189) in S.cerevisiae 18S rRNA. Involved the biosynthesis of the hypermodified N1-methyl-N3-(3-amino-3-carboxypropyl) pseudouridine (m1acp3-Psi) conserved in eukaryotic 18S rRNA. Also has an essential role in 40S ribosomal subunit biogenesis independent on its methyltransferase activity, facilitating the incorporation of ribosomal protein S19 during the formation of pre-ribosomes. The polypeptide is Ribosomal RNA small subunit methyltransferase NEP1 (Candida albicans (Yeast)).